The primary structure comprises 841 residues: MTQVTVKQLADEVKTPVERLLQQMREAGLPHTAADEGVSDSEKQSLLTHLKSSHKAKVEEPRKITLQRKTTSTLRVAGSKSISVEVRKKKVFVQRSPEEIEAERKRELEERRAVENAARQKAEEEAKRRAEEEARRQPAAAQPAGTEAVAAPVAPVEAVREAAPVAAAPAPAADARKRDEPRRPDKPRADDNNRRGGGGDGERKNAPHRASVKEKAPAPRVAPRTTDEESDGFRRGGRGKAKLKKRNAHGFQSPTGPVVRDVQIGETITVGDLANQMSVKAAEIIKFMFKLGTPATINQVLDQETAQLVAEELGHKVTLVSDTALEDSLAESLKFEGETFSRAPVVTVMGHVDHGKTSLLDYIRRAKVAAGEAGGITQHIGAYHVETERGMVTFLDTPGHAAFTAMRARGAKATDIVILVVAADDGVMPQTIEAVQHAKAAGVPLVVAVNKIDKPGADLDRIRSELSVHGVTSEEWGGDTPFVSVSAKVGTGVDELLEAVLLQAEVLELKATPSAPGRGVVVESRLDKGRGPVATVLVQDGTLRQGDMVLVGSNYGRVRAMLDENGKPIKEAGPSIPVEILGLDGTPDAGDEMSVLSDEKKAREVALFRQGKFREVKLARAHAGKLENIFENMGQAEKKTLNIVLKSDVRGSLEALNGALNGLGNDEVQVRVVGGGVGGITESDANLALASNAVLFGFNVRADAGARKIVEQEGLDMRYYNVIYDIIEDVKKALTGMLGSDVRENILGVAEVRDVFRSPKFGAIAGCMVIEGTVYRNRPIRVLREDIVIFEGELESLRRFKDDASEVRAGMECGIGVKSYNDVKAGDKIEVYEKVQVARSL.

Residues 94–258 (QRSPEEIEAE…HGFQSPTGPV (165 aa)) form a disordered region. Residues 96–136 (SPEEIEAERKRELEERRAVENAARQKAEEEAKRRAEEEARR) are compositionally biased toward basic and acidic residues. A compositionally biased stretch (low complexity) spans 137 to 173 (QPAAAQPAGTEAVAAPVAPVEAVREAAPVAAAPAPAA). Composition is skewed to basic and acidic residues over residues 174–194 (DARK…DNNR), 200–217 (DGER…EKAP), and 225–234 (TTDEESDGFR). Residues 235-248 (RGGRGKAKLKKRNA) show a composition bias toward basic residues. The tr-type G domain maps to 341 to 510 (SRAPVVTVMG…LLQAEVLELK (170 aa)). A G1 region spans residues 350-357 (GHVDHGKT). Residue 350–357 (GHVDHGKT) participates in GTP binding. Residues 375-379 (GITQH) are G2. Residues 396 to 399 (DTPG) are G3. GTP-binding positions include 396 to 400 (DTPGH) and 450 to 453 (NKID). The tract at residues 450-453 (NKID) is G4. A G5 region spans residues 486–488 (SAK).

The protein belongs to the TRAFAC class translation factor GTPase superfamily. Classic translation factor GTPase family. IF-2 subfamily.

It is found in the cytoplasm. Its function is as follows. One of the essential components for the initiation of protein synthesis. Protects formylmethionyl-tRNA from spontaneous hydrolysis and promotes its binding to the 30S ribosomal subunits. Also involved in the hydrolysis of GTP during the formation of the 70S ribosomal complex. The polypeptide is Translation initiation factor IF-2 (Pseudomonas fluorescens (strain SBW25)).